Here is a 354-residue protein sequence, read N- to C-terminus: Uroporphyrinogen decarboxylase (354 aa).

Residues 27 to 31, Phe46, Asp77, Tyr153, Thr208, and His326 each bind substrate; that span reads RQAGR.

It belongs to the uroporphyrinogen decarboxylase family. Homodimer.

It is found in the cytoplasm. It catalyses the reaction uroporphyrinogen III + 4 H(+) = coproporphyrinogen III + 4 CO2. It functions in the pathway porphyrin-containing compound metabolism; protoporphyrin-IX biosynthesis; coproporphyrinogen-III from 5-aminolevulinate: step 4/4. In terms of biological role, catalyzes the decarboxylation of four acetate groups of uroporphyrinogen-III to yield coproporphyrinogen-III. This chain is Uroporphyrinogen decarboxylase, found in Neisseria meningitidis serogroup A / serotype 4A (strain DSM 15465 / Z2491).